Here is a 341-residue protein sequence, read N- to C-terminus: Small ribosomal subunit biogenesis GTPase RsgA (341 aa).

Residues 112–268 enclose the CP-type G domain; sequence RQQLIAANLD…LIDTPGMREL (157 aa). GTP contacts are provided by residues 157 to 160 and 210 to 218; these read TKVD and GSSGAGKST. Zn(2+) contacts are provided by cysteine 290, cysteine 295, histidine 297, and cysteine 303.

The protein belongs to the TRAFAC class YlqF/YawG GTPase family. RsgA subfamily. In terms of assembly, monomer. Associates with 30S ribosomal subunit, binds 16S rRNA. It depends on Zn(2+) as a cofactor.

Its subcellular location is the cytoplasm. One of several proteins that assist in the late maturation steps of the functional core of the 30S ribosomal subunit. Helps release RbfA from mature subunits. May play a role in the assembly of ribosomal proteins into the subunit. Circularly permuted GTPase that catalyzes slow GTP hydrolysis, GTPase activity is stimulated by the 30S ribosomal subunit. This chain is Small ribosomal subunit biogenesis GTPase RsgA, found in Xylella fastidiosa (strain 9a5c).